The sequence spans 117 residues: Large-conductance mechanosensitive channel (117 aa).

The next 3 helical transmembrane spans lie at 7-27, 30-50, and 64-84; these read EFAL…GAAF, IVTA…FGTV, and GMFV…FIFV.

Belongs to the MscL family. As to quaternary structure, homopentamer.

It is found in the cell membrane. In terms of biological role, channel that opens in response to stretch forces in the membrane lipid bilayer. May participate in the regulation of osmotic pressure changes within the cell. The chain is Large-conductance mechanosensitive channel from Staphylococcus saprophyticus subsp. saprophyticus (strain ATCC 15305 / DSM 20229 / NCIMB 8711 / NCTC 7292 / S-41).